The primary structure comprises 435 residues: Protein lin-54 (435 aa).

Positions 73–136 are disordered; that stretch reads DEPIDTSSHR…PASLPRTVQP (64 aa). A compositionally biased stretch (polar residues) spans 102 to 120; sequence TPGSSQYTVRNLSNLSGSP. In terms of domain architecture, CRC spans 173–288; sequence QRKPCNCTKS…KCKGCQNTET (116 aa). A DNA-binding region spans residues 175 to 188; sequence KPCNCTKSQCLKLY. C177, C179, C184, C189, C191, C198, C201, C203, and C206 together coordinate Zn(2+). Residues 235-250 are linker; it reads IGIARGGITDIERLHQ. The Zn(2+) site is built by C253, C255, C260, C265, C267, C274, C278, C280, and C283. A DNA-binding region spans residues 253–266; that stretch reads CHCKKSGCLKNYCE. The tract at residues 415–435 is disordered; the sequence is LTQDLDAAPTDDIPGPSTSTS.

The protein belongs to the lin-54 family. Component of the DRM complex, at least composed of lin-9, lin-35, lin-37, lin-52, lin-53, lin-54- dpl-1 and efl-1.

It localises to the nucleus. Its subcellular location is the chromosome. Its function is as follows. Synthetic multivulva class B (synMuvB) protein. SynMuvB proteins are required to repress the induction of vulval development by Ras signaling and probably act by forming the multiprotein DRM complex that repress transcription. The polypeptide is Protein lin-54 (Caenorhabditis elegans).